The following is a 1678-amino-acid chain: Serine/threonine-protein kinase pakD (1678 aa).

Residues methionine 1–serine 15 show a composition bias toward low complexity. Disordered regions lie at residues methionine 1 to phenylalanine 73, asparagine 180 to asparagine 224, glutamine 262 to asparagine 428, and lysine 442 to serine 489. Residues phenylalanine 17 to glutamate 34 show a composition bias toward polar residues. Composition is skewed to low complexity over residues glutamine 35–phenylalanine 73 and asparagine 180–asparagine 214. The region spanning lysine 82 to asparagine 189 is the Calponin-homology (CH) domain. A compositionally biased stretch (polar residues) spans arginine 215–asparagine 224. Low complexity-rich tracts occupy residues asparagine 276–asparagine 359 and asparagine 399–asparagine 428. Over residues aspartate 460–serine 472 the composition is skewed to acidic residues. 2 coiled-coil regions span residues lysine 512 to leucine 542 and threonine 570 to threonine 628. Low complexity-rich tracts occupy residues serine 631–serine 654, asparagine 662–serine 671, and asparagine 695–serine 713. 2 disordered regions span residues serine 631 to arginine 672 and proline 693 to asparagine 722. Residues valine 752–aspartate 862 are a coiled coil. The Phorbol-ester/DAG-type zinc finger occupies proline 1141–cysteine 1197. Positions valine 1202–glycine 1215 constitute a CRIB domain. Disordered regions lie at residues leucine 1267–glutamine 1292 and asparagine 1323–asparagine 1346. The stretch at asparagine 1269 to isoleucine 1309 forms a coiled coil. The region spanning tyrosine 1376–leucine 1647 is the Protein kinase domain. Residues valine 1382–valine 1390 and lysine 1405 contribute to the ATP site. Aspartate 1515 functions as the Proton acceptor in the catalytic mechanism.

The protein belongs to the protein kinase superfamily. STE Ser/Thr protein kinase family. STE20 subfamily. It depends on Mg(2+) as a cofactor.

It carries out the reaction L-seryl-[protein] + ATP = O-phospho-L-seryl-[protein] + ADP + H(+). The enzyme catalyses L-threonyl-[protein] + ATP = O-phospho-L-threonyl-[protein] + ADP + H(+). The polypeptide is Serine/threonine-protein kinase pakD (Dictyostelium discoideum (Social amoeba)).